The primary structure comprises 89 residues: MTEAQKSLKRTLIGKVVSDKRQKTVTVLVERRVKHELYGKIIARSSKYHAHDEKGEYKLGDMIEITESRPLSKTKNWVASRLVQKAGLL.

Belongs to the universal ribosomal protein uS17 family. As to quaternary structure, part of the 30S ribosomal subunit.

One of the primary rRNA binding proteins, it binds specifically to the 5'-end of 16S ribosomal RNA. This chain is Small ribosomal subunit protein uS17, found in Verminephrobacter eiseniae (strain EF01-2).